The sequence spans 302 residues: Small ribosomal subunit biogenesis GTPase RsgA (302 aa).

Residues 75–233 (KNELIRPAVS…IMDTPGFSSM (159 aa)) form the CP-type G domain. GTP is bound by residues 124-127 (NKKD) and 175-183 (GPSGVGKSS). The Zn(2+) site is built by C257, C262, H264, and C270.

The protein belongs to the TRAFAC class YlqF/YawG GTPase family. RsgA subfamily. As to quaternary structure, monomer. Associates with 30S ribosomal subunit, binds 16S rRNA. Requires Zn(2+) as cofactor.

It localises to the cytoplasm. Its function is as follows. One of several proteins that assist in the late maturation steps of the functional core of the 30S ribosomal subunit. Helps release RbfA from mature subunits. May play a role in the assembly of ribosomal proteins into the subunit. Circularly permuted GTPase that catalyzes slow GTP hydrolysis, GTPase activity is stimulated by the 30S ribosomal subunit. The protein is Small ribosomal subunit biogenesis GTPase RsgA of Agathobacter rectalis (strain ATCC 33656 / DSM 3377 / JCM 17463 / KCTC 5835 / VPI 0990) (Eubacterium rectale).